The primary structure comprises 482 residues: Altronate oxidoreductase (482 aa).

18–29 (IIQFGEGNFLRA) serves as a coordination point for NAD(+).

The protein belongs to the mannitol dehydrogenase family. UxaB subfamily.

It carries out the reaction D-altronate + NAD(+) = keto-D-tagaturonate + NADH + H(+). It participates in carbohydrate metabolism; pentose and glucuronate interconversion. The protein is Altronate oxidoreductase of Shigella sonnei (strain Ss046).